A 570-amino-acid chain; its full sequence is Probable D-xylulose kinase A (570 aa).

The substrate site is built by histidine 95, arginine 166, aspartate 282, and asparagine 283. Residues tryptophan 364, 469 to 470, and asparagine 473 contribute to the ATP site; that span reads GG.

It belongs to the FGGY kinase family.

It is found in the cytoplasm. It carries out the reaction D-xylulose + ATP = D-xylulose 5-phosphate + ADP + H(+). Functionally, highly specific D-xylulose kinase which participates in the catabolism of xylose. Xylose is a major component of hemicelluloses such as xylan. Most fungi utilize D-xylose via three enzymatic reactions, xylose reductase (XR), xylitol dehydrogenase (XDH), and xylulokinase, to form xylulose 5-phosphate, which enters pentose phosphate pathway. This chain is Probable D-xylulose kinase A (xkiA), found in Aspergillus niger (strain ATCC MYA-4892 / CBS 513.88 / FGSC A1513).